The chain runs to 277 residues: Proteasome subunit beta type-7 (277 aa).

Positions 1–43 are cleaved as a propeptide — removed in mature form; the sequence is MAAVSVFQAPVGGFSFDNCRRNAVLEADFAKKGFKLPKARKTG. Residue Thr44 is the Nucleophile of the active site.

This sequence belongs to the peptidase T1B family. As to quaternary structure, the 26S proteasome consists of a 20S proteasome core and two 19S regulatory subunits. The 20S proteasome core is a barrel-shaped complex made of 28 subunits that are arranged in four stacked rings. The two outer rings are each formed by seven alpha subunits, and the two inner rings are formed by seven beta subunits. The proteolytic activity is exerted by three beta-subunits PSMB5, PSMB6 and PSMB7.

The protein localises to the cytoplasm. It is found in the nucleus. It catalyses the reaction Cleavage of peptide bonds with very broad specificity.. Its function is as follows. Component of the 20S core proteasome complex involved in the proteolytic degradation of most intracellular proteins. This complex plays numerous essential roles within the cell by associating with different regulatory particles. Associated with two 19S regulatory particles, forms the 26S proteasome and thus participates in the ATP-dependent degradation of ubiquitinated proteins. The 26S proteasome plays a key role in the maintenance of protein homeostasis by removing misfolded or damaged proteins that could impair cellular functions, and by removing proteins whose functions are no longer required. Associated with the PA200 or PA28, the 20S proteasome mediates ubiquitin-independent protein degradation. This type of proteolysis is required in several pathways including spermatogenesis (20S-PA200 complex) or generation of a subset of MHC class I-presented antigenic peptides (20S-PA28 complex). Within the 20S core complex, PSMB7 displays a trypsin-like activity. The chain is Proteasome subunit beta type-7 (Psmb7) from Rattus norvegicus (Rat).